A 205-amino-acid polypeptide reads, in one-letter code: MIRRKKDKFSLLLTEIAKNIDETAEYFVNFKVTNQTTLKEFADTLKEYETKGDNHVHVMIKELNKAFITPIEREDILQLTNSLDDVLDGIEHFSAMMEIFSITSSDEHIDKFSGYIRECAKEILITIELLAENRLKDIQPHAIKIKEYEHSCDNLHRKSLKNLFGNETDPIKVIQYREIYETLEEIADSCQSVANNLETIIMKNA.

This sequence belongs to the UPF0111 family.

This is UPF0111 protein YkaA (ykaA) from Bacillus subtilis (strain 168).